The primary structure comprises 257 residues: Thiazole synthase (257 aa).

The Schiff-base intermediate with DXP role is filled by Lys-96. 1-deoxy-D-xylulose 5-phosphate-binding positions include Gly-157, 184 to 185 (AG), and 206 to 207 (NT).

Belongs to the ThiG family. Homotetramer. Forms heterodimers with either ThiH or ThiS.

The protein resides in the cytoplasm. It carries out the reaction [ThiS sulfur-carrier protein]-C-terminal-Gly-aminoethanethioate + 2-iminoacetate + 1-deoxy-D-xylulose 5-phosphate = [ThiS sulfur-carrier protein]-C-terminal Gly-Gly + 2-[(2R,5Z)-2-carboxy-4-methylthiazol-5(2H)-ylidene]ethyl phosphate + 2 H2O + H(+). Its pathway is cofactor biosynthesis; thiamine diphosphate biosynthesis. Functionally, catalyzes the rearrangement of 1-deoxy-D-xylulose 5-phosphate (DXP) to produce the thiazole phosphate moiety of thiamine. Sulfur is provided by the thiocarboxylate moiety of the carrier protein ThiS. In vitro, sulfur can be provided by H(2)S. The protein is Thiazole synthase of Bartonella bacilliformis (strain ATCC 35685 / KC583 / Herrer 020/F12,63).